The chain runs to 395 residues: Elongation factor Tu (395 aa).

Positions 10–204 (KTHANIGTIG…AVDEYIPTPE (195 aa)) constitute a tr-type G domain. Positions 19 to 26 (GHVDHGKT) are G1. 19-26 (GHVDHGKT) contributes to the GTP binding site. Thr26 is a binding site for Mg(2+). The segment at 60–64 (GITIN) is G2. Positions 81–84 (DCPG) are G3. GTP contacts are provided by residues 81 to 85 (DCPGH) and 136 to 139 (NKVD). The G4 stretch occupies residues 136 to 139 (NKVD). The G5 stretch occupies residues 174–176 (SAL).

It belongs to the TRAFAC class translation factor GTPase superfamily. Classic translation factor GTPase family. EF-Tu/EF-1A subfamily. As to quaternary structure, monomer.

It is found in the cytoplasm. The enzyme catalyses GTP + H2O = GDP + phosphate + H(+). Its function is as follows. GTP hydrolase that promotes the GTP-dependent binding of aminoacyl-tRNA to the A-site of ribosomes during protein biosynthesis. The chain is Elongation factor Tu from Macrococcus caseolyticus (strain JCSC5402) (Macrococcoides caseolyticum).